The sequence spans 481 residues: Multiple inositol polyphosphate phosphatase 1 (481 aa).

A signal peptide spans 1–30 (MLRGARSHLPASVAPAAVLAAALLSSFARC). Residue H89 is part of the active site. Residues N236 and N475 are each glycosylated (N-linked (GlcNAc...) asparagine). Residues 478 to 481 (SDEL) carry the Prevents secretion from ER motif.

The protein belongs to the histidine acid phosphatase family. MINPP1 subfamily. Post-translationally, N-glycosylated. Widely expressed with highest levels in kidney, intestine, thymus and liver.

The protein resides in the endoplasmic reticulum lumen. The protein localises to the secreted. Its subcellular location is the cell membrane. It catalyses the reaction 1D-myo-inositol hexakisphosphate + H2O = 1D-myo-inositol 1,2,4,5,6-pentakisphosphate + phosphate. The catalysed reaction is 1D-myo-inositol 1,2,4,5,6-pentakisphosphate + H2O = 1D-myo-inositol 1,2,5,6-tetrakisphosphate + phosphate. It carries out the reaction 1D-myo-inositol 1,2,5,6-tetrakisphosphate + H2O = 1D-myo-inositol 1,2,6-trisphosphate + phosphate. The enzyme catalyses 1D-myo-inositol 1,2,6-trisphosphate + H2O = 1D-myo-inositol 1,2-bisphosphate + phosphate. It catalyses the reaction 1D-myo-inositol 1,2-bisphosphate + H2O = 1D-myo-inositol 2-phosphate + phosphate. The catalysed reaction is 1D-myo-inositol hexakisphosphate + H2O = 1D-myo-inositol 1,2,3,5,6-pentakisphosphate + phosphate. It carries out the reaction 1D-myo-inositol 1,2,3,5,6-pentakisphosphate + H2O = 1D-myo-inositol 1,2,3,6-tetrakisphosphate + phosphate. The enzyme catalyses 1D-myo-inositol 1,2,3,6-tetrakisphosphate + H2O = 1D-myo-inositol 1,2,3-trisphosphate + phosphate. It catalyses the reaction 1D-myo-inositol 1,2,3-trisphosphate + H2O = 1D-myo-inositol 2,3-bisphosphate + phosphate. The catalysed reaction is 1D-myo-inositol 2,3-bisphosphate + H2O = 1D-myo-inositol 2-phosphate + phosphate. It carries out the reaction 1D-myo-inositol 1,3,4,5,6-pentakisphosphate + H2O = 1D-myo-inositol 1,4,5,6-tetrakisphosphate + phosphate. The enzyme catalyses 1D-myo-inositol 1,4,5,6-tetrakisphosphate + H2O = 1D-myo-inositol 1,4,5-trisphosphate + phosphate. It catalyses the reaction (2R)-2,3-bisphosphoglycerate + H2O = (2R)-2-phosphoglycerate + phosphate. Multiple inositol polyphosphate phosphatase that hydrolyzes 1D-myo-inositol 1,3,4,5,6-pentakisphosphate (InsP5[2OH]) and 1D-myo-inositol hexakisphosphate (InsP6) to a range of less phosphorylated inositol phosphates. This regulates the availability of these various small molecule second messengers and metal chelators which control many aspects of cell physiology. Has a weak in vitro activity towards 1D-myo-inositol 1,4,5-trisphosphate which is unlikely to be physiologically relevant. By regulating intracellular inositol polyphosphates pools, which act as metal chelators, it may control the availability of intracellular calcium and iron, which are important for proper neuronal development and homeostasis. May have a dual substrate specificity, and function as a 2,3-bisphosphoglycerate 3-phosphatase hydrolyzing 2,3-bisphosphoglycerate to 2-phosphoglycerate. 2,3-bisphosphoglycerate (BPG) is formed as part of the Rapoport-Luebering glycolytic bypass and is a regulator of systemic oxygen homeostasis as the major allosteric effector of hemoglobin. The sequence is that of Multiple inositol polyphosphate phosphatase 1 from Mus musculus (Mouse).